Here is a 329-residue protein sequence, read N- to C-terminus: Beta-ketoacyl-[acyl-carrier-protein] synthase III (329 aa).

Active-site residues include Cys123 and His256. The segment at 257–261 (QANVR) is ACP-binding. Asn286 is an active-site residue.

This sequence belongs to the thiolase-like superfamily. FabH family. In terms of assembly, homodimer.

It localises to the cytoplasm. The enzyme catalyses malonyl-[ACP] + acetyl-CoA + H(+) = 3-oxobutanoyl-[ACP] + CO2 + CoA. It functions in the pathway lipid metabolism; fatty acid biosynthesis. Catalyzes the condensation reaction of fatty acid synthesis by the addition to an acyl acceptor of two carbons from malonyl-ACP. Catalyzes the first condensation reaction which initiates fatty acid synthesis and may therefore play a role in governing the total rate of fatty acid production. Possesses both acetoacetyl-ACP synthase and acetyl transacylase activities. Its substrate specificity determines the biosynthesis of branched-chain and/or straight-chain of fatty acids. The polypeptide is Beta-ketoacyl-[acyl-carrier-protein] synthase III (Bordetella parapertussis (strain 12822 / ATCC BAA-587 / NCTC 13253)).